The following is a 419-amino-acid chain: MAQEVIKIRGGQALKGEVEISGAKNSAVAIIPATLLAQGQVKLEGLPQISDVETLVSLLEDLNIEARLNGKQLEVDTTQIENAPLPNNKVESLRASYYMMGAMLGRFKKCVIGLPGGCPLGPRPIDQHIKGFKALGAEIDESSNTSMKLVAKELRGAHIFLDMVSVGATINIMLAAVHAKGQTVIDNAAKEPEVVDVANFLMSMGADIRGAGTTSIKINGVEELKGSEYQIIPDRIEAGSYMCMAAAMGEEVILHNIVPKHVEALTVKLQELGVDIEIEDEKIIIRKQTPYKNVDIKTLVYPGFATDLQQPITPLLFMTEGPSFVTDTIYPARFKHVEELQRMGANIKSDEGTAVIKPSTLNGAEVYASDLRAGACLITAGLIAEGVTTIFNVKHIYRGYTNIVEHLKALGADIWTETV.

Residue 24 to 25 (KN) participates in phosphoenolpyruvate binding. Position 94 (Arg-94) interacts with UDP-N-acetyl-alpha-D-glucosamine. Residue Cys-118 is the Proton donor of the active site. Cys-118 is subject to 2-(S-cysteinyl)pyruvic acid O-phosphothioketal. Residues 123 to 127 (RPIDQ), Asp-307, and Ile-329 contribute to the UDP-N-acetyl-alpha-D-glucosamine site.

It belongs to the EPSP synthase family. MurA subfamily.

The protein resides in the cytoplasm. The catalysed reaction is phosphoenolpyruvate + UDP-N-acetyl-alpha-D-glucosamine = UDP-N-acetyl-3-O-(1-carboxyvinyl)-alpha-D-glucosamine + phosphate. It participates in cell wall biogenesis; peptidoglycan biosynthesis. Cell wall formation. Adds enolpyruvyl to UDP-N-acetylglucosamine. This chain is UDP-N-acetylglucosamine 1-carboxyvinyltransferase 2, found in Staphylococcus epidermidis (strain ATCC 35984 / DSM 28319 / BCRC 17069 / CCUG 31568 / BM 3577 / RP62A).